Reading from the N-terminus, the 322-residue chain is Reticulocalbin-1 (322 aa).

An N-terminal signal peptide occupies residues Met-1 to Ala-19. Asn-44 is a glycosylation site (N-linked (GlcNAc...) asparagine). EF-hand domains lie at Glu-70–Arg-105, Tyr-106–Ser-141, Lys-157–Glu-192, Met-194–Arg-229, Trp-235–Asp-270, and His-271–Ser-306. Ca(2+) is bound by residues Asp-83, Asp-85, Asn-87, Tyr-89, Glu-94, Asp-119, Asn-121, Asp-123, Lys-125, Glu-130, Asp-170, Asp-172, Asp-174, Glu-181, Asp-207, Asn-209, Asp-211, His-213, Glu-218, Asp-248, Asn-250, Asp-252, Lys-254, Glu-259, Asp-284, Asp-286, Asp-288, Met-290, and Glu-295. The Prevents secretion from ER signature appears at His-319–Leu-322.

This sequence belongs to the CREC family.

It localises to the endoplasmic reticulum lumen. Its function is as follows. May regulate calcium-dependent activities in the endoplasmic reticulum lumen or post-ER compartment. This is Reticulocalbin-1 (rcn1) from Takifugu rubripes (Japanese pufferfish).